The following is a 3218-amino-acid chain: Serine/threonine-protein kinase Smg1 (3218 aa).

Residues 32–78 (LNNNGNHGDSSNEGGGGNGSGRGGATGSGNIAGLGGSESMWSPGGGK) form a disordered region. Residues 33–43 (NNNGNHGDSSN) show a composition bias toward low complexity. Residues 44 to 67 (EGGGGNGSGRGGATGSGNIAGLGG) show a composition bias toward gly residues. Residue Ser-70 is modified to Phosphoserine. Residues 1289–1692 (DAAAAAREEG…IFPAVVGANR (404 aa)) form the FAT domain. The stretch at 1643 to 1678 (APWKVIIPQLFSRLNHHEPYVRKSVCDLLCRLAKSR) is one HEAT repeat. One can recognise a PI3K/PI4K catalytic domain in the interval 1897-2232 (VESSVCVLPT…LGVGDLKYHK (336 aa)). The interval 1903-1909 (VLPTKTK) is G-loop. The interval 2101–2109 (GLGDRHLDN) is catalytic loop. The tract at residues 2121-2145 (HIDYNVCFEKGRTLRIPEKVPFRLT) is activation loop. Positions 3186–3218 (QRSTVAEQVDYVIREACNPENLAVLYEGWTPWV) constitute an FATC domain.

It belongs to the PI3/PI4-kinase family. Component of a post-splicing multiprotein NMD complex. The cofactor is Mn(2+).

The protein localises to the cytoplasm. The enzyme catalyses L-seryl-[protein] + ATP = O-phospho-L-seryl-[protein] + ADP + H(+). The catalysed reaction is L-threonyl-[protein] + ATP = O-phospho-L-threonyl-[protein] + ADP + H(+). Serine/threonine protein kinase involved in mRNA surveillance. Recognizes the substrate consensus sequence [ST]-Q. Involved in nonsense-mediated decay (NMD) of mRNAs containing premature stop codons, probably by phosphorylating Upf1. The polypeptide is Serine/threonine-protein kinase Smg1 (nonC) (Drosophila melanogaster (Fruit fly)).